The chain runs to 236 residues: Leucyl/phenylalanyl-tRNA--protein transferase (236 aa).

This sequence belongs to the L/F-transferase family.

Its subcellular location is the cytoplasm. It carries out the reaction N-terminal L-lysyl-[protein] + L-leucyl-tRNA(Leu) = N-terminal L-leucyl-L-lysyl-[protein] + tRNA(Leu) + H(+). The enzyme catalyses N-terminal L-arginyl-[protein] + L-leucyl-tRNA(Leu) = N-terminal L-leucyl-L-arginyl-[protein] + tRNA(Leu) + H(+). The catalysed reaction is L-phenylalanyl-tRNA(Phe) + an N-terminal L-alpha-aminoacyl-[protein] = an N-terminal L-phenylalanyl-L-alpha-aminoacyl-[protein] + tRNA(Phe). Functionally, functions in the N-end rule pathway of protein degradation where it conjugates Leu, Phe and, less efficiently, Met from aminoacyl-tRNAs to the N-termini of proteins containing an N-terminal arginine or lysine. This is Leucyl/phenylalanyl-tRNA--protein transferase from Shewanella sp. (strain MR-4).